The following is a 199-amino-acid chain: MSCGDAKLNHPAPHFNEVALMPNGTFKKVDLASYRGKWVVLFFYPLDFTFVCPTEICQFSDRVKEFNDVDCEVIACSMDSEFSHLAWTNVERKKGGLGTMNIPILADKTKSIMKAYGVLKEEDGVAYRGLFIIDPQQNLRQITINDLPVGRNVDETLRLVKAFQFVEKHGEVCPANWKPGSKTMKADPNGSQDYFSSMN.

Positions 6-165 (AKLNHPAPHF…TLRLVKAFQF (160 aa)) constitute a Thioredoxin domain. Residue C52 is the Cysteine sulfenic acid (-SOH) intermediate of the active site. The interval 179-199 (PGSKTMKADPNGSQDYFSSMN) is disordered. Residues 189–199 (NGSQDYFSSMN) show a composition bias toward polar residues.

This sequence belongs to the peroxiredoxin family. AhpC/Prx1 subfamily. In terms of assembly, homodimer; disulfide-linked, upon oxidation.

It carries out the reaction a hydroperoxide + [thioredoxin]-dithiol = an alcohol + [thioredoxin]-disulfide + H2O. Its function is as follows. Thiol-specific peroxidase that catalyzes the reduction of hydrogen peroxide and organic hydroperoxides to water and alcohols, respectively. Plays a role in cell protection against oxidative stress by detoxifying peroxides and as sensor of hydrogen peroxide-mediated signaling events. This is Thioredoxin peroxidase from Trypanosoma brucei rhodesiense.